We begin with the raw amino-acid sequence, 281 residues long: 2-dehydro-3-deoxyphosphooctonate aldolase (281 aa).

Belongs to the KdsA family.

The protein resides in the cytoplasm. It carries out the reaction D-arabinose 5-phosphate + phosphoenolpyruvate + H2O = 3-deoxy-alpha-D-manno-2-octulosonate-8-phosphate + phosphate. It functions in the pathway carbohydrate biosynthesis; 3-deoxy-D-manno-octulosonate biosynthesis; 3-deoxy-D-manno-octulosonate from D-ribulose 5-phosphate: step 2/3. It participates in bacterial outer membrane biogenesis; lipopolysaccharide biosynthesis. The sequence is that of 2-dehydro-3-deoxyphosphooctonate aldolase from Pseudomonas savastanoi pv. phaseolicola (strain 1448A / Race 6) (Pseudomonas syringae pv. phaseolicola (strain 1448A / Race 6)).